A 206-amino-acid polypeptide reads, in one-letter code: MNPIYFQARFLTSAPDLRRMPPDQGREVAFAGRSNVGKSSAINTLTNQKSLARTSKTPGRTQLINVFPITDEAALVDLPGYGYAKVPAAVRRRWDQVLPEYLAGRRALRGVVLVMDLRHPLTDFDRQMLDWCGHIGVPLHVLLTKADKFKAGAARNRGQNVGRQLRAEWPGVTWQIFSASKRMGVDEAHARLDEWLGLGPAAGEGR.

An EngB-type G domain is found at glutamine 24–leucine 198. Residues glycine 32–serine 39, glycine 59–leucine 63, aspartate 77–glycine 80, threonine 144–aspartate 147, and phenylalanine 177–alanine 179 contribute to the GTP site. Positions 39 and 61 each coordinate Mg(2+).

This sequence belongs to the TRAFAC class TrmE-Era-EngA-EngB-Septin-like GTPase superfamily. EngB GTPase family. Mg(2+) serves as cofactor.

Functionally, necessary for normal cell division and for the maintenance of normal septation. The chain is Probable GTP-binding protein EngB from Alkalilimnicola ehrlichii (strain ATCC BAA-1101 / DSM 17681 / MLHE-1).